The following is a 1004-amino-acid chain: Bifunctional glutamine synthetase adenylyltransferase/adenylyl-removing enzyme (1004 aa).

Residues 1–496 (MVRPPSARSA…LHAKLFYRPL (496 aa)) are adenylyl removase. The interval 502–1004 (RMDPDALRLS…RAVVERVFGS (503 aa)) is adenylyl transferase.

Belongs to the GlnE family. The cofactor is Mg(2+).

It carries out the reaction [glutamine synthetase]-O(4)-(5'-adenylyl)-L-tyrosine + phosphate = [glutamine synthetase]-L-tyrosine + ADP. The enzyme catalyses [glutamine synthetase]-L-tyrosine + ATP = [glutamine synthetase]-O(4)-(5'-adenylyl)-L-tyrosine + diphosphate. Its function is as follows. Involved in the regulation of glutamine synthetase GlnA, a key enzyme in the process to assimilate ammonia. When cellular nitrogen levels are high, the C-terminal adenylyl transferase (AT) inactivates GlnA by covalent transfer of an adenylyl group from ATP to specific tyrosine residue of GlnA, thus reducing its activity. Conversely, when nitrogen levels are low, the N-terminal adenylyl removase (AR) activates GlnA by removing the adenylyl group by phosphorolysis, increasing its activity. The regulatory region of GlnE binds the signal transduction protein PII (GlnB) which indicates the nitrogen status of the cell. This chain is Bifunctional glutamine synthetase adenylyltransferase/adenylyl-removing enzyme, found in Nocardia farcinica (strain IFM 10152).